Consider the following 542-residue polypeptide: DM7 family protein GG17591 (542 aa).

The segment covering 415-430 (GETQEMDEAHPTKEES) has biased composition (basic and acidic residues). The interval 415–443 (GETQEMDEAHPTKEESKSEEEGEVQSGSQ) is disordered.

The protein belongs to the DM7 family.

This Drosophila erecta (Fruit fly) protein is DM7 family protein GG17591.